The chain runs to 446 residues: MATILQHLPTGQKVGIAFSGGLDTSAALHWMKLKGALPYAYTAHLGQPDEPDYDEIPRKAMQYGAEKARLIDCRAQLVAEGLAALQAGAFHISTAGVTYFNTTPIGRAVTGTMLVAAMKEDDVHIWGDGSTFKGNDIERFYRYGLLTNPALKIYKPWLDQTFIDELGGRAEMSAFMTQAGFGYKMSAEKAYSTDSNLLGATHEAKDLEHLSSGIRIVNPIMGVAFWRDEVEVKREEVTVRFEEGRPVALNGIEFADPVALLLEANRIGGRHGLGMSDQIENRIIEAKSRGIYEAPGLALLHIAYERLVTGIHNEDTIEQYRDNGRKLGRLLYQGRWFDPQAIMLRETAQRWVARAVTGEVALELRRGNDYSILDTRSPNLTYQPERLSMEKVEDAPFSPADRIGQLTMRNLDIVDTRAKLGIYAKSGLLSLGSGAALARLQNDDPS.

Residues 17-25 (AFSGGLDTS) and A43 contribute to the ATP site. Y99 contacts L-citrulline. Residues G129 and T131 each contribute to the ATP site. Positions 131, 135, and 136 each coordinate L-aspartate. Residue N135 coordinates L-citrulline. D136 is a binding site for ATP. L-citrulline contacts are provided by R139 and S192. D194 contributes to the ATP binding site. T201, E203, and E280 together coordinate L-citrulline.

It belongs to the argininosuccinate synthase family. Type 2 subfamily. Homotetramer.

Its subcellular location is the cytoplasm. It carries out the reaction L-citrulline + L-aspartate + ATP = 2-(N(omega)-L-arginino)succinate + AMP + diphosphate + H(+). It functions in the pathway amino-acid biosynthesis; L-arginine biosynthesis; L-arginine from L-ornithine and carbamoyl phosphate: step 2/3. The protein is Argininosuccinate synthase of Methylibium petroleiphilum (strain ATCC BAA-1232 / LMG 22953 / PM1).